A 200-amino-acid chain; its full sequence is Eukaryotic translation initiation factor isoform 4E (200 aa).

The interval 1 to 22 (MATEAPIEATEVPPASATETVA) is disordered. MRNA contacts are provided by residues 44–49 (QGAAWG), lysine 76, and 94–95 (WE). Cysteine 99 and cysteine 138 form a disulfide bridge. MRNA contacts are provided by residues 145–150 (RRSQDK) and 189–192 (KRER).

The protein belongs to the eukaryotic initiation factor 4E family. In terms of assembly, EIF4F is a multi-subunit complex, the composition of which varies with external and internal environmental conditions. It is composed of at least EIF4A, EIF4E and EIF4G. EIF4E is also known to interact with other partners. In higher plants two isoforms of EIF4F have been identified, named isoform EIF4F and isoform EIF(iso)4F. Isoform EIF4F has subunits p220 and p26, whereas isoform EIF(iso)4F has subunits p82 and p28. As to quaternary structure, (Microbial infection) Interacts with viral genome-linked protein (VPg); this interaction is possible in susceptible hosts but impaired in resistant plants. According to the redox status, the Cys-99-Cys-138 disulfide bridge may have a role in regulating protein function by affecting its ability to bind capped mRNA. In terms of tissue distribution, expressed ubiquitously in seedlings, roots, leaves, sepals, petals, anthers and dehisced pollen, with highest levels in pollen, maturing anthers and roots. Strongly expressed in susceptible plants but not in resistant ones.

It is found in the cytoplasm. The protein resides in the nucleus. In terms of biological role, component of the protein complex eIF4F, which is involved in the recognition of the mRNA cap, ATP-dependent unwinding of 5'-terminal secondary structure and recruitment of mRNA to the ribosome. Recognizes and binds the 7-methylguanosine-containing mRNA cap during an early step in the initiation of protein synthesis and facilitates ribosome binding by inducing the unwinding of the mRNAs secondary structures. Key component of recessive resistance to potyviruses. Functionally, (Microbial infection) Susceptibility host factor required for viral infection (e.g. potato virus Y (PVY) and pepper mottle virus (PepMoV)) by recruiting viral RNAs to the host ribosomal complex via an interaction with viral genome-linked protein (VPg). The polypeptide is Eukaryotic translation initiation factor isoform 4E (Nicotiana tabacum (Common tobacco)).